A 314-amino-acid polypeptide reads, in one-letter code: MLSVNELALEIFDNLADLAEEFNAVYHELDNGARIVDCGVSTRGGYAAGRAFTEICMGGLGEVNFRMGQIKEFPQPFIDVNTDFPSIACLGAQKAGWTVKVGNYFAMGSGPARALSLKPKHTYEVIDYEDDYDCAVICLESDHLPNAEVMNKIAEECHVDVANTCAVVAPTSSIVGSIQVSGRCVETAIYKLNELGFDTRKIASAIGTAPIPPVRGAKRAMGVTNDATIYHGQIQLTMNAPEIKDYLEKIPSSKSKGYGKPFNDIFKEAGYDFYKIDTSLFSPAEVIINELSDGSVYRVGAVNTDVTLKSFGLQ.

Belongs to the MCH family.

The protein localises to the cytoplasm. It carries out the reaction 5,10-methenyl-5,6,7,8-tetrahydromethanopterin + H2O = N(5)-formyl-5,6,7,8-tetrahydromethanopterin + H(+). The protein operates within one-carbon metabolism; methanogenesis from CO(2); 5,10-methenyl-5,6,7,8-tetrahydromethanopterin from CO(2): step 3/3. Its function is as follows. Catalyzes the reversible interconversion of 5-formyl-H(4)MPT to methenyl-H(4)MPT(+). The polypeptide is Methenyltetrahydromethanopterin cyclohydrolase (Methanoregula boonei (strain DSM 21154 / JCM 14090 / 6A8)).